A 494-amino-acid polypeptide reads, in one-letter code: Amidophosphoribosyltransferase (494 aa).

A propeptide spanning residues 1 to 10 (MFNYSGLNEE) is cleaved from the precursor. C11 acts as the Nucleophile in catalysis. The region spanning 11–231 (CGVFGIWNHP…AGEYVVINDK (221 aa)) is the Glutamine amidotransferase type-2 domain. S294, D356, and D357 together coordinate Mg(2+).

The protein in the C-terminal section; belongs to the purine/pyrimidine phosphoribosyltransferase family. It depends on Mg(2+) as a cofactor.

It catalyses the reaction 5-phospho-beta-D-ribosylamine + L-glutamate + diphosphate = 5-phospho-alpha-D-ribose 1-diphosphate + L-glutamine + H2O. The protein operates within purine metabolism; IMP biosynthesis via de novo pathway; N(1)-(5-phospho-D-ribosyl)glycinamide from 5-phospho-alpha-D-ribose 1-diphosphate: step 1/2. In terms of biological role, catalyzes the formation of phosphoribosylamine from phosphoribosylpyrophosphate (PRPP) and glutamine. The protein is Amidophosphoribosyltransferase of Staphylococcus aureus (strain COL).